The sequence spans 238 residues: Probable succinyl-CoA:3-ketoacid coenzyme A transferase subunit A (238 aa).

24–30 (GGFGLCG) contributes to the CoA binding site.

It belongs to the 3-oxoacid CoA-transferase subunit A family. Heterodimer of a subunit A and a subunit B.

The catalysed reaction is a 3-oxo acid + succinyl-CoA = a 3-oxoacyl-CoA + succinate. The chain is Probable succinyl-CoA:3-ketoacid coenzyme A transferase subunit A (scoA) from Bacillus subtilis (strain 168).